The following is a 1154-amino-acid chain: MFSKNINKVRFNLTLMDEGEYYFDDYSAIFYPPSNTEEESWQKRIAGRILVCSSSMFFEPDDSKLPIMKFPYKDMSSIGAWLNSLSSAPPAHLPTPQPIPQSILSPSKPTPTPTPPIVVEQPSPTRSAFSRLLSFSSLTSKVTTPTPPTPTPTPPTPQPTSIAPTPTIATNPYTSFSVSPNPPSPLLSQLFEQAKPSFLASKGDIFYVKSSQVIEMKENSRNHPYIFKQYNNIDFKFSFNYVKQNIVLDVMKVFHNYSGKEKIQRDELIKQMVEDRENKIFFDITQLVDMNERNILELKCSKISPLVENPGRLLITNARLYFQPMNNIEENRLKNYSLQSIIRVLQRRHSLREIGLELFFDDGSSLFLKFNNTITRNQVYDLLVKHLCTNIMHINEQANYLLKWQNGIISNYDYLLYLNNLAGRTFNDLTQYPVFPWIIADYQSTTLDLNRNETFRDLSKPIGALNPTRLATFQDRYHQIPDDQPKFLYGTHYSTPAYVLYFLVRQVPEYMLRLQNGRFDSPNRMFYSIEETWNSVLNSTTDVKELIPEFYKPSFESSSSSRNGGGGDDDDNFENGIFLTNSENLPLGIRQDNNVINDIILPPWASSPKDFISKLHQALESEYVSQNLHHWIDLIFGYKQKGEEAVRANNLFYHLTYEGSIDIESITNPFEREGMEAQINEFGQTPRQIFKTPHPQRLPQQLRNQNLKIELSDLEQNINFIFDELNNCNINELNNDNDNNLNNNNNNNNNNNSNSNSNLNNNYIDSNINNNINNIENINSLNNENNENSNDKKNNSNSNSSDNIKNSNGFENNDNNFNNENENLNDENENLTFLGEERNNSNNWGSLNFLKFNQNIKLHKDKISALYLSNNSETIYSVSLDSCLKIYSLKEKRQIRSLNLCNLALSSFQLSKDEKYIIIGSWDNNIYVYSVGNGSISYSIPGHSDAVSCLKLHNNNILVSGSWDSSVKVWRTHRQSNGAISIEKTPIADFVDSDTEIRSIDISSNGTIFCAGSSDGYLYFYDLLTLQLIRRISCFFDELVCIKFTPDGSRIITACIDGSVKLIGIEGSEIFSFKVKGEIHCLDSDGSSLIIGTDRGLCLWSLTTGTEIKDSISPFLSQSSNESIHSLNVSINQSSNKPILLTGTEAGSISIWQQ.

Disordered regions lie at residues 92 to 123 (HLPT…EQPS) and 139 to 167 (TSKV…PTPT). Pro residues predominate over residues 145 to 158 (PTPPTPTPTPPTPQ). The 96-residue stretch at 289-384 (DMNERNILEL…TRNQVYDLLV (96 aa)) folds into the BEACH-type PH domain. Residues 389-697 (TNIMHINEQA…QIFKTPHPQR (309 aa)) form the BEACH domain. Disordered regions lie at residues 554 to 575 (SFES…NFEN), 739 to 762 (NNLN…LNNN), and 779 to 825 (NSLN…ENLN). 2 stretches are compositionally biased toward low complexity: residues 779-788 (NSLNNENNEN) and 795-822 (NSNS…NENE). WD repeat units follow at residues 858-897 (LHKD…QIRS), 900-939 (LCNL…ISYS), 942-980 (GHSD…NGAI), 992-1031 (DSDT…LIRR), 1034-1074 (CFFD…FSFK), 1076-1110 (KGEI…EIKD), and 1119-1154 (SSNE…IWQQ).

In Dictyostelium discoideum (Social amoeba), this protein is BEACH domain-containing protein lvsF (lvsF).